We begin with the raw amino-acid sequence, 276 residues long: Rhomboid protease GlpG (276 aa).

Transmembrane regions (helical) follow at residues 94–114, 142–162, 169–189, 192–212, 229–249, and 250–270; these read GPVT…MQIL, ALMH…WYLG, LGSG…GYVQ, FSGP…GYVW, LIIF…GMSM, and ANGA…VDSL. The active-site Nucleophile is the serine 201. Residue histidine 254 is part of the active site.

It belongs to the peptidase S54 family.

It localises to the cell inner membrane. It catalyses the reaction Cleaves type-1 transmembrane domains using a catalytic dyad composed of serine and histidine that are contributed by different transmembrane domains.. Functionally, rhomboid-type serine protease that catalyzes intramembrane proteolysis. In Escherichia coli O45:K1 (strain S88 / ExPEC), this protein is Rhomboid protease GlpG.